Consider the following 342-residue polypeptide: Renalase (342 aa).

The signal sequence occupies residues 1 to 17 (MAQVLIVGAGMTGSLCA). Residues threonine 12, arginine 42, and 61 to 62 (QY) contribute to the FAD site.

The protein belongs to the renalase family. The cofactor is FAD. In terms of tissue distribution, secreted into the blood by the kidney. Highly expressed in the kidney, expressed at lower level in heart, skeletal muscle and small intestine. Its plasma concentration is markedly reduced in patients with end-stage renal disease, as compared with healthy subjects.

It is found in the secreted. It catalyses the reaction 1,2-dihydro-beta-NAD + O2 + H(+) = H2O2 + NAD(+). It carries out the reaction 1,2-dihydro-beta-NADP + O2 + H(+) = H2O2 + NADP(+). The enzyme catalyses 1,6-dihydro-beta-NADP + O2 + H(+) = H2O2 + NADP(+). The catalysed reaction is 1,6-dihydro-beta-NAD + O2 + H(+) = H2O2 + NAD(+). In terms of biological role, catalyzes the oxidation of the less abundant 1,2-dihydro-beta-NAD(P) and 1,6-dihydro-beta-NAD(P) to form beta-NAD(P)(+). The enzyme hormone is secreted by the kidney, and circulates in blood and modulates cardiac function and systemic blood pressure. Lowers blood pressure in vivo by decreasing cardiac contractility and heart rate and preventing a compensatory increase in peripheral vascular tone, suggesting a causal link to the increased plasma catecholamine and heightened cardiovascular risk. High concentrations of catecholamines activate plasma renalase and promotes its secretion and synthesis. The sequence is that of Renalase (RNLS) from Homo sapiens (Human).